Reading from the N-terminus, the 1448-residue chain is Gag-Pol polyprotein (1448 aa).

Residue Gly2 is the site of N-myristoyl glycine; by host attachment. The Nuclear export signal motif lies at 16 to 22 (WEKIYLR). Residues 26-32 (KKKYMMK) carry the Nuclear localization signal motif. The span at 107 to 116 (KMKAEQKEPE) shows a compositional bias: basic and acidic residues. Positions 107-129 (KMKAEQKEPEPEQAAGAAAAPES) are disordered. The span at 118–128 (EQAAGAAAAPE) shows a compositional bias: low complexity. Position 135 is a phosphotyrosine; by host (Tyr135). CCHC-type zinc fingers lie at residues 393–410 (IKCF…NCKA) and 414–431 (KGCW…DCRS). Composition is skewed to basic and acidic residues over residues 446-460 (REAR…KERA) and 473-490 (GEDH…DREL). The tract at residues 446-490 (REARKFPPDNNKERANSPSNRELWVSGGEDHTGDREGRKGEDREL) is disordered. The Peptidase A2 domain maps to 517–586 (KEALLDTGAD…TPVNIIGRNF (70 aa)). The active-site For protease activity; shared with dimeric partner is the Asp522. Positions 640 to 830 (EGKISRIGPE…PPFLWMGYEL (191 aa)) constitute a Reverse transcriptase domain. The Mg(2+) site is built by Asp706, Asp781, and Asp782. The interval 823–831 (FLWMGYELH) is RT 'primer grip'. Residues 994 to 1010 (WETWWTEYWQATWIPDW) carry the Tryptophan repeat motif motif. Residues 1030-1153 (ISGAETYYVD…IDKLVSTGIR (124 aa)) form the RNase H type-1 domain. Mg(2+) contacts are provided by Asp1039, Glu1074, Asp1094, and Asp1145. The segment at 1159–1200 (DGIDKAQEEHERYHSNWKAMASDFNLPPIVAKEIVASCDKCQ) adopts an Integrase-type zinc-finger fold. Zn(2+)-binding residues include His1168, His1172, Cys1196, and Cys1199. One can recognise an Integrase catalytic domain in the interval 1210 to 1360 (INCSPGVWQL…TAGERIIDII (151 aa)). Mg(2+) is bound by residues Asp1220 and Asp1272. Residues 1379-1426 (FRVYYRDSREPTWKGPAKLLWKGEGAVVIQDNGDIKVVPRRKAKIIRD) constitute a DNA-binding region (integrase-type).

In terms of assembly, homotrimer. Interacts with gp41 (via C-terminus). Homodimer. The active site consists of two apposed aspartic acid residues. As to quaternary structure, heterodimer of p66 RT and p51 RT (RT p66/p51). Heterodimerization of RT is essential for DNA polymerase activity. Despite the sequence identities, p66 RT and p51 RT have distinct folding. In terms of assembly, homotetramer; may further associate as a homohexadecamer. It depends on Mg(2+) as a cofactor. Specific enzymatic cleavages by the viral protease yield mature proteins. The protease is released by autocatalytic cleavage. The polyprotein is cleaved during and after budding, this process is termed maturation. Proteolytic cleavage of p66 RT removes the RNase H domain to yield the p51 RT subunit. In terms of processing, capsid protein p24 is phosphorylated.

It localises to the virion. It is found in the host nucleus. The protein resides in the host cytoplasm. Its subcellular location is the host cell membrane. The enzyme catalyses Specific for a P1 residue that is hydrophobic, and P1' variable, but often Pro.. The catalysed reaction is Endohydrolysis of RNA in RNA/DNA hybrids. Three different cleavage modes: 1. sequence-specific internal cleavage of RNA. Human immunodeficiency virus type 1 and Moloney murine leukemia virus enzymes prefer to cleave the RNA strand one nucleotide away from the RNA-DNA junction. 2. RNA 5'-end directed cleavage 13-19 nucleotides from the RNA end. 3. DNA 3'-end directed cleavage 15-20 nucleotides away from the primer terminus.. It carries out the reaction 3'-end directed exonucleolytic cleavage of viral RNA-DNA hybrid.. It catalyses the reaction DNA(n) + a 2'-deoxyribonucleoside 5'-triphosphate = DNA(n+1) + diphosphate. With respect to regulation, the viral protease is inhibited by many synthetic protease inhibitors (PIs), such as amprenavir, atazanavir, indinavir, loprinavir, nelfinavir, ritonavir and saquinavir. RT can be inhibited either by nucleoside RT inhibitors (NRTIs) or by non nucleoside RT inhibitors (NNRTIs). NRTIs act as chain terminators, whereas NNRTIs inhibit DNA polymerization by binding a small hydrophobic pocket near the RT active site and inducing an allosteric change in this region. Classical NRTIs are abacavir, adefovir (PMEA), didanosine (ddI), lamivudine (3TC), stavudine (d4T), tenofovir (PMPA), zalcitabine (ddC), and zidovudine (AZT). Classical NNRTIs are atevirdine (BHAP U-87201E), delavirdine, efavirenz (DMP-266), emivirine (I-EBU), and nevirapine (BI-RG-587). The tritherapies used as a basic effective treatment of AIDS associate two NRTIs and one NNRTI. Use of protease inhibitors in tritherapy regimens permit more ambitious therapeutic strategies. Functionally, gag-Pol polyprotein and Gag polyprotein may regulate their own translation, by the binding genomic RNA in the 5'-UTR. At low concentration, Gag-Pol and Gag would promote translation, whereas at high concentration, the polyproteins encapsidate genomic RNA and then shut off translation. Matrix protein p17 has two main functions: in infected cell, it targets Gag and Gag-pol polyproteins to the plasma membrane via a multipartite membrane-binding signal, that includes its myristointegration complex. The myristoylation signal and the NLS exert conflicting influences its subcellular localization. The key regulation of these motifs might be phosphorylation of a portion of MA molecules on the C-terminal tyrosine at the time of virus maturation, by virion-associated cellular tyrosine kinase. Implicated in the release from host cell mediated by Vpu. Its function is as follows. Capsid protein p24 forms the conical core that encapsulates the genomic RNA-nucleocapsid complex in the virion. The core is constituted by capsid protein hexamer subunits. The core is disassembled soon after virion entry. Interaction with host PPIA/CYPA protects the virus from restriction by host TRIM5-alpha and from an unknown antiviral activity in host cells. This capsid restriction by TRIM5 is one of the factors which restricts SIV to the simian species. In terms of biological role, nucleocapsid protein p7 encapsulates and protects viral dimeric unspliced (genomic) RNA. Binds these RNAs through its zinc fingers. Facilitates rearangement of nucleic acid secondary structure during retrotranscription of genomic RNA. This capability is referred to as nucleic acid chaperone activity. Functionally, the aspartyl protease mediates proteolytic cleavages of Gag and Gag-Pol polyproteins during or shortly after the release of the virion from the plasma membrane. Cleavages take place as an ordered, step-wise cascade to yield mature proteins. This process is called maturation. Displays maximal activity during the budding process just prior to particle release from the cell. Also cleaves Nef and Vif, probably concomitantly with viral structural proteins on maturation of virus particles. Hydrolyzes host EIF4GI and PABP1 in order to shut off the capped cellular mRNA translation. The resulting inhibition of cellular protein synthesis serves to ensure maximal viral gene expression and to evade host immune response. Reverse transcriptase/ribonuclease H (RT) is a multifunctional enzyme that converts the viral dimeric RNA genome into dsDNA in the cytoplasm, shortly after virus entry into the cell. This enzyme displays a DNA polymerase activity that can copy either DNA or RNA templates, and a ribonuclease H (RNase H) activity that cleaves the RNA strand of RNA-DNA heteroduplexes in a partially processive 3' to 5' endonucleasic mode. Conversion of viral genomic RNA into dsDNA requires many steps. A tRNA binds to the primer-binding site (PBS) situated at the 5'-end of the viral RNA. RT uses the 3' end of the tRNA primer to perform a short round of RNA-dependent minus-strand DNA synthesis. The reading proceeds through the U5 region and ends after the repeated (R) region which is present at both ends of viral RNA. The portion of the RNA-DNA heteroduplex is digested by the RNase H, resulting in a ssDNA product attached to the tRNA primer. This ssDNA/tRNA hybridizes with the identical R region situated at the 3' end of viral RNA. This template exchange, known as minus-strand DNA strong stop transfer, can be either intra- or intermolecular. RT uses the 3' end of this newly synthesized short ssDNA to perform the RNA-dependent minus-strand DNA synthesis of the whole template. RNase H digests the RNA template except for two polypurine tracts (PPTs) situated at the 5'-end and near the center of the genome. It is not clear if both polymerase and RNase H activities are simultaneous. RNase H can probably proceed both in a polymerase-dependent (RNA cut into small fragments by the same RT performing DNA synthesis) and a polymerase-independent mode (cleavage of remaining RNA fragments by free RTs). Secondly, RT performs DNA-directed plus-strand DNA synthesis using the PPTs that have not been removed by RNase H as primers. PPTs and tRNA primers are then removed by RNase H. The 3' and 5' ssDNA PBS regions hybridize to form a circular dsDNA intermediate. Strand displacement synthesis by RT to the PBS and PPT ends produces a blunt ended, linear dsDNA copy of the viral genome that includes long terminal repeats (LTRs) at both ends. Its function is as follows. Integrase catalyzes viral DNA integration into the host chromosome, by performing a series of DNA cutting and joining reactions. This enzyme activity takes place after virion entry into a cell and reverse transcription of the RNA genome in dsDNA. The first step in the integration process is 3' processing. This step requires a complex comprising the viral genome, matrix protein, Vpr and integrase. This complex is called the pre-integration complex (PIC). The integrase protein removes 2 nucleotides from each 3' end of the viral DNA, leaving recessed CA OH's at the 3' ends. In the second step, the PIC enters cell nucleus. This process is mediated through integrase and Vpr proteins, and allows the virus to infect a non dividing cell. This ability to enter the nucleus is specific of lentiviruses, other retroviruses cannot and rely on cell division to access cell chromosomes. In the third step, termed strand transfer, the integrase protein joins the previously processed 3' ends to the 5' ends of strands of target cellular DNA at the site of integration. The 5'-ends are produced by integrase-catalyzed staggered cuts, 5 bp apart. A Y-shaped, gapped, recombination intermediate results, with the 5'-ends of the viral DNA strands and the 3' ends of target DNA strands remaining unjoined, flanking a gap of 5 bp. The last step is viral DNA integration into host chromosome. This involves host DNA repair synthesis in which the 5 bp gaps between the unjoined strands are filled in and then ligated. Since this process occurs at both cuts flanking the SIV genome, a 5 bp duplication of host DNA is produced at the ends of SIV integration. Alternatively, Integrase may catalyze the excision of viral DNA just after strand transfer, this is termed disintegration. This chain is Gag-Pol polyprotein (gag-pol), found in Pan troglodytes (Chimpanzee).